We begin with the raw amino-acid sequence, 232 residues long: Cysteine proteinase inhibitor 7 (232 aa).

The first 29 residues, 1 to 29 (MDMRRASMCMMLICVSLVLLSGFGQFVIC), serve as a signal peptide directing secretion. Cystatin domains are found at residues 46–135 (GGFS…KNII) and 152–214 (FDWR…ERGN). The Secondary area of contact motif lies at 91–95 (QVVAG). Phosphoserine is present on S181.

It belongs to the cystatin family. Phytocystatin subfamily.

The protein localises to the secreted. In terms of biological role, specific inhibitor of cysteine proteinases. Probably involved in the regulation of endogenous processes and in defense against pests and pathogens. In Arabidopsis thaliana (Mouse-ear cress), this protein is Cysteine proteinase inhibitor 7 (CYS7).